Consider the following 449-residue polypeptide: MGRMFGTDGVRGVANKELTADLAYKLGKAGAFILTEGAHRPKILVGMDTRISGDMLESALVAGILSVGAEAICVGVIPTPAIAYLTRKYNADAGVVISASHNPVEYNGIKFFNKNGYKLSDELEDSIQALIKDDFKGVPVLTGENIGRKIEEDGEAIRDYIDFAKSTIKGDLKGLKVALDCANGASYITSVEAFKELGAEVHVINNKPDGININRNSGSTHPEDLMEYVVKNNCHMGLAFDGDADRCLAIDEKGNLINGDFILAICGKELKKQGRLKKNTIVVTVMSNLGLDIAMKKEEINTIKTKVGDRYVLEEMLKNDYAIGGEQSGHIIFSDYNTTGDGLVTALQLAHIVKERGKTFSELCSIMKELPQVLVNAKVPNDQKDIYLKDEEIKSEIDTITKNLDGSGRVLIRPSGTEPLVRVMLEGENQEEIDKLAHSLAKLIENKVK.

The Phosphoserine intermediate role is filled by Ser-100. Mg(2+) is bound by residues Ser-100, Asp-241, Asp-243, and Asp-245. Position 100 is a phosphoserine (Ser-100).

This sequence belongs to the phosphohexose mutase family. Mg(2+) is required as a cofactor. Activated by phosphorylation.

It catalyses the reaction alpha-D-glucosamine 1-phosphate = D-glucosamine 6-phosphate. Catalyzes the conversion of glucosamine-6-phosphate to glucosamine-1-phosphate. This Clostridium botulinum (strain 657 / Type Ba4) protein is Phosphoglucosamine mutase.